We begin with the raw amino-acid sequence, 504 residues long: MAAIGVHFGYTCACVAVFKDGRADVVANDAGDRVTPAVVAYRDTEQIVGIAAKQGRIRNAANTVVKVKQILGRRYDDPDAQAHKEESKCIVVNKSGLPRYEIDTGETTKYVSPEDVAKLIFHKMKETAQSALGSDVKDAVITVPFEFDEMQKNALRQAAESAGFNVLRLIHEPSAALLAYDIGQDSPLGKSHVLVYKLGGTSLSVTVLEVNSGVYRVLATQTDHQTGGESFTQELAQHLAAEFKKTFKQDVSGNARAMMKLMNSADVAKHTLSTLGSANCFVDSLYDGMDFECNVSRARFELICSSLFNKCIQPIKSLLEQVNLSTSDVNKVVLSGGSARIPKLQQMIRDLFPDVELLNSIPPDEVIPVGAAMQAGILVGKDSLALGEDSITVDCCASDITLKEVDDSGLEVFTVLFPSGTPLPARRQHTLQGPGSLSSVRLQLFQAQQPIAQIVLGDLEPKEELHDVVTVLTMKRDGSLHVTCTEQSSGRSEAITIETAAAAS.

It belongs to the heat shock protein 70 family. As to quaternary structure, component of ribosome-associated complex (RAC).

The protein localises to the cytoplasm. The protein resides in the cytosol. Its function is as follows. Component of the ribosome-associated complex (RAC), a complex involved in folding or maintaining nascent polypeptides in a folding-competent state. This is Heat shock 70 kDa protein 14 (hspa14) from Danio rerio (Zebrafish).